We begin with the raw amino-acid sequence, 413 residues long: 26S proteasome regulatory subunit 6B homolog (413 aa).

Residues Met1–Asp30 are disordered. A coiled-coil region spans residues Glu32 to Val80. An ATP-binding site is contributed by Gly201–Thr208.

This sequence belongs to the AAA ATPase family.

The protein localises to the cytoplasm. Its subcellular location is the nucleus. Its function is as follows. The 26S proteasome is involved in the ATP-dependent degradation of ubiquitinated proteins. The regulatory (or ATPase) complex confers ATP dependency and substrate specificity to the 26S complex. The protein is 26S proteasome regulatory subunit 6B homolog of Solanum tuberosum (Potato).